Here is an 85-residue protein sequence, read N- to C-terminus: Makatoxin-3 (85 aa).

Positions 1-19 (MNYLIVISFALLLMTGVES) are cleaved as a signal peptide. One can recognise an LCN-type CS-alpha/beta domain in the interval 21-83 (RDAYIAKKEN…VPIRIPGPCI (63 aa)). Disulfide bonds link Cys-31–Cys-82, Cys-35–Cys-55, Cys-41–Cys-65, and Cys-45–Cys-67.

Belongs to the long (4 C-C) scorpion toxin superfamily. Sodium channel inhibitor family. Alpha subfamily. Expressed by the venom gland.

It is found in the secreted. Its function is as follows. This protein markedly relaxes the rat carbachol-precontracted anococcygeus muscle. This relaxation is inhibited by the inhibitor of nitric oxide (NO) synthase, N-nitro-L-arginine methyl ester (L-NAME), suggesting that the response induced by this protein is NO-mediated. The sequence is that of Makatoxin-3 from Olivierus martensii (Manchurian scorpion).